The following is a 95-amino-acid chain: Co-chaperonin GroES (95 aa).

This sequence belongs to the GroES chaperonin family. As to quaternary structure, heptamer of 7 subunits arranged in a ring. Interacts with the chaperonin GroEL.

The protein resides in the cytoplasm. In terms of biological role, together with the chaperonin GroEL, plays an essential role in assisting protein folding. The GroEL-GroES system forms a nano-cage that allows encapsulation of the non-native substrate proteins and provides a physical environment optimized to promote and accelerate protein folding. GroES binds to the apical surface of the GroEL ring, thereby capping the opening of the GroEL channel. The sequence is that of Co-chaperonin GroES from Francisella tularensis subsp. holarctica (strain FTNF002-00 / FTA).